A 284-amino-acid chain; its full sequence is Tropomyosin alpha-1 chain (284 aa).

Residues 1–37 (MDAIKKKMQMLKLDKENALDRAEQAETDKKAAEERSK) are disordered. Residues 1–284 (MDAIKKKMQM…DHALNDMTSI (284 aa)) adopt a coiled-coil conformation. A compositionally biased stretch (basic and acidic residues) spans 12–37 (KLDKENALDRAEQAETDKKAAEERSK).

It belongs to the tropomyosin family. As to quaternary structure, homodimer. Heterodimer of an alpha (TPM1, TPM3 or TPM4) and a beta (TPM2) chain.

Its subcellular location is the cytoplasm. The protein localises to the cytoskeleton. In terms of biological role, binds to actin filaments in muscle and non-muscle cells. Plays a central role, in association with the troponin complex, in the calcium dependent regulation of vertebrate striated muscle contraction. Smooth muscle contraction is regulated by interaction with caldesmon. In non-muscle cells is implicated in stabilizing cytoskeleton actin filaments. In Danio rerio (Zebrafish), this protein is Tropomyosin alpha-1 chain (tpma).